A 170-amino-acid chain; its full sequence is Probable inactive uracil-DNA glycosylase, mitochondrial (170 aa).

The N-terminal 53 residues, 1–53 (MALSTPKTLMDFFQPAKRLKASPSSSSSFPAVSVAGRSRDLGSVANSPPRVTV), are a transit peptide targeting the mitochondrion.

This sequence belongs to the uracil-DNA glycosylase (UDG) superfamily. UNG family.

Its subcellular location is the mitochondrion. Probable inactive paralog of AtUNG (AC Q9LIH6) generated by a gene duplication event and subsequently disrupted by at least two transposon insertions. The chain is Probable inactive uracil-DNA glycosylase, mitochondrial from Arabidopsis thaliana (Mouse-ear cress).